Consider the following 552-residue polypeptide: MDNMSITNTPTSNDACLSIVHSLMCHRQGGESETFAKRAIESLVKKLKEKKDELDSLITAITTNGAHPSKCVTIQRTLDGRLQVAGRKGFPHVIYARLWRWPDLHKNELKHVKYCQYAFDLKCDSVCVNPYHYERVVSPGIDLSGLTLQSNAPPSMLVKDEYVHDFEGQPSLPTEGHSIQTIQHPPSNRASTETYSAPALLAPSESNATSTTNFPNIPVASTSQPASILAGSHSEGLLQIASGPQPGQQQNGFTAQPATYHHNSTTTWTGSRTAPYTPNLPHHQNGHLQHHPPMPPHPGHYWPVHNELAFQPPISNHPAPEYWCSIAYFEMDVQVGETFKVPSSCPIVTVDGYVDPSGGDRFCLGQLSNVHRTEAIERARLHIGKGVQLECKGEGDVWVRCLSDHAVFVQSYYLDREAGRAPGDAVHKIYPSAYIKVFDLRQCHRQMQQQAATAQAAAAAQAAAVAGNIPGPGSVGGIAPAISLSAAAGIGVDDLRRLCILRMSFVKGWGPDYPRQSIKETPCWIEIHLHRALQLLDEVLHTMPIADPQPLD.

The segment at 1–322 (MDNMSITNTP…PISNHPAPEY (322 aa)) is mediates interaction with ZBTB7A. Positions 18–142 (SIVHSLMCHR…YERVVSPGID (125 aa)) constitute an MH1 domain. At Lys-37 the chain carries N6-acetyllysine. Positions 44–69 (VKKLKEKKDELDSLITAITTNGAHPS) are required for interaction with TSC22D1. Residue Cys-71 coordinates Zn(2+). Lys-113 is covalently cross-linked (Glycyl lysine isopeptide (Lys-Gly) (interchain with G-Cter in SUMO2)). Positions 115, 127, and 132 each coordinate Zn(2+). The segment at 167-193 (EGQPSLPTEGHSIQTIQHPPSNRASTE) is disordered. Polar residues predominate over residues 177 to 193 (HSIQTIQHPPSNRASTE). Positions 275-320 (PYTPNLPHHQNGHLQHHPPMPPHPGHYWPVHNELAFQPPISNHPAP) are SAD. The 230-residue stretch at 323–552 (WCSIAYFEMD…MPIADPQPLD (230 aa)) folds into the MH2 domain. N6-acetyllysine occurs at positions 428 and 507. Residue Lys-519 forms a Glycyl lysine isopeptide (Lys-Gly) (interchain with G-Cter in ubiquitin) linkage.

It belongs to the dwarfin/SMAD family. As to quaternary structure, monomer; in the absence of TGF-beta activation. Heterotrimer; on TGF-beta activation. Heterotrimer composed of two molecules of a C-terminally phosphorylated R-SMAD molecule, SMAD2 or SMAD3, and one molecule of SMAD4 to form the transcriptional active SMAD2/SMAD3-SMAD4 complex. Found in a ternary complex composed of SMAD4, STK11/LKB1 and STK11IP. Found in a complex with SMAD1 and YY1. Identified in a complex that contains at least ZNF451, SMAD2, SMAD3 and SMAD4. Interacts with ATF2, COPS5, DACH1, MSG1, SKI, STK11/LKB1, STK11IP and TRIM33. Associates with ZNF423 or ZNF521 in response to BMP2 leading to activate transcription of BMP target genes. Interacts with USP9X. Interacts with RBPMS. Interacts with WWTR1 (via coiled-coil domain). Interacts with CITED1 and CITED2. Interacts with PDPK1 (via PH domain). Interacts with VPS39; this interaction affects heterodimer formation with SMAD3, but not with SMAD2, and leads to inhibition of SMAD3-dependent transcription activation. Interactions with VPS39 and SMAD2 may be mutually exclusive. Interacts (via MH2 domain) with ZNF451 (via N-terminal zinc-finger domains). Interacts with ZC3H3. Interacts weakly with ZNF8. Interacts with NUP93 and IPO7; translocates SMAD4 to the nucleus through the NPC upon BMP7 stimulation resulting in activation of SMAD4 signaling. Interacts with CREB3L1, the interaction takes place upon TGFB1 induction and SMAD4 acts as a CREB3L1 coactivator to induce the expression of genes involved in the assembly of collagen extracellular matrix. Interacts with DLX1. Interacts with ZBTB7A; the interaction is direct and stimulated by TGFB1. Interacts with CREBBP; the recruitment of this transcriptional coactivator is negatively regulated by ZBTB7A. Interacts with EP300; the interaction with this transcriptional coactivator is negatively regulated by ZBTB7A. Interacts with HDAC1. Interacts (via MH2 domain) with ZMIZ1 (via SP-RING-type domain); in the TGF-beta signaling pathway increases the activity of the SMAD3/SMAD4 transcriptional complex. Interacts (via N-terminus) with TSC22D1. Post-translationally, phosphorylated by PDPK1. Monoubiquitinated on Lys-519 by E3 ubiquitin-protein ligase TRIM33. Monoubiquitination hampers its ability to form a stable complex with activated SMAD2/3 resulting in inhibition of TGF-beta/BMP signaling cascade. Deubiquitination by USP9X restores its competence to mediate TGF-beta signaling.

The protein localises to the cytoplasm. It is found in the nucleus. In terms of biological role, common SMAD (co-SMAD) is the coactivator and mediator of signal transduction by TGF-beta (transforming growth factor). Component of the heterotrimeric SMAD2/SMAD3-SMAD4 complex that forms in the nucleus and is required for the TGF-mediated signaling. Promotes binding of the SMAD2/SMAD4/FAST-1 complex to DNA and provides an activation function required for SMAD1 or SMAD2 to stimulate transcription. Component of the multimeric SMAD3/SMAD4/JUN/FOS complex which forms at the AP1 promoter site; required for synergistic transcriptional activity in response to TGF-beta. Acts synergistically with SMAD1 and YY1 in bone morphogenetic protein (BMP)-mediated cardiac-specific gene expression. Binds to SMAD binding elements (SBEs) (5'-GTCT/AGAC-3') within BMP response element (BMPRE) of cardiac activating regions. May act as a tumor suppressor. Positively regulates PDPK1 kinase activity by stimulating its dissociation from the 14-3-3 protein YWHAQ which acts as a negative regulator. In muscle physiology, plays a central role in the balance between atrophy and hypertrophy. When recruited by MSTN, promotes atrophy response via phosphorylated SMAD2/4. MSTN decrease causes SMAD4 release and subsequent recruitment by the BMP pathway to promote hypertrophy via phosphorylated SMAD1/5/8. This chain is Mothers against decapentaplegic homolog 4 (Smad4), found in Rattus norvegicus (Rat).